The sequence spans 68 residues: Alpha-conotoxin-like Mr1.2 (68 aa).

Positions 1–21 (MGMRMMFTVFLLVVLATTVVS) are cleaved as a signal peptide. The propeptide occupies 22–48 (FTSDRGSDGRNAAAKDKASDLVALTVK). Disulfide bonds link Cys50–Cys56 and Cys51–Cys64. The segment at 52 to 54 (SNP) is ser-Xaa-Pro motif, crucial for potent interaction with nAChR. Position 65 is an asparagine amide (Asn65).

It belongs to the conotoxin A superfamily. In terms of tissue distribution, expressed by the venom duct.

The protein resides in the secreted. Its function is as follows. Alpha-conotoxins act on postsynaptic membranes, they bind to the nicotinic acetylcholine receptors (nAChR) and thus inhibit them. This chain is Alpha-conotoxin-like Mr1.2, found in Conus marmoreus (Marble cone).